A 216-amino-acid polypeptide reads, in one-letter code: GTPase IMAP family member GIMD1 (216 aa).

The AIG1-type G domain maps to 5–216 (KMTINLALFG…ENCYQVLTFK (212 aa)). Residues 14–22 (GMTQSGKSS), S35, and 147–149 (HAE) each bind GTP.

The protein belongs to the TRAFAC class TrmE-Era-EngA-EngB-Septin-like GTPase superfamily. AIG1/Toc34/Toc159-like paraseptin GTPase family. IAN subfamily.

The protein is GTPase IMAP family member GIMD1 (GIMD1) of Bos taurus (Bovine).